The following is a 428-amino-acid chain: Diaminopimelate decarboxylase (428 aa).

Position 64 is an N6-(pyridoxal phosphate)lysine (K64). Residues G239 and 281-284 (EPGR) each bind pyridoxal 5'-phosphate. The substrate site is built by R284, R319, and Y323. Catalysis depends on C350, which acts as the Proton donor. Residues E351 and Y379 each coordinate substrate. Position 379 (Y379) interacts with pyridoxal 5'-phosphate.

It belongs to the Orn/Lys/Arg decarboxylase class-II family. LysA subfamily. Homodimer. Pyridoxal 5'-phosphate is required as a cofactor.

The enzyme catalyses meso-2,6-diaminopimelate + H(+) = L-lysine + CO2. It participates in amino-acid biosynthesis; L-lysine biosynthesis via DAP pathway; L-lysine from DL-2,6-diaminopimelate: step 1/1. Its function is as follows. Specifically catalyzes the decarboxylation of meso-diaminopimelate (meso-DAP) to L-lysine. The chain is Diaminopimelate decarboxylase from Methanothermobacter thermautotrophicus (strain ATCC 29096 / DSM 1053 / JCM 10044 / NBRC 100330 / Delta H) (Methanobacterium thermoautotrophicum).